A 289-amino-acid polypeptide reads, in one-letter code: Xylosylprotein 4-beta-galactosyltransferase (289 aa).

Over 1–6 (MKLKTR) the chain is Cytoplasmic. A helical; Signal-anchor for type II membrane protein membrane pass occupies residues 7 to 27 (LILSGTILISLAACYFLVLLV). The Lumenal segment spans residues 28–289 (LDLEITRDLM…DLNWTPYCKS (262 aa)). 58 to 62 (PYRDR) lines the UDP-alpha-D-galactose pocket. Residues Asn81 and Asn90 are each glycosylated (N-linked (GlcNAc...) asparagine). Residues 97–99 (FNR), 123–124 (VD), Tyr154, and Trp184 contribute to the UDP-alpha-D-galactose site. Asp124 serves as a coordination point for Mn(2+). N-acetyl-D-glucosamine is bound at residue 186-189 (LEDD). A glycan (N-linked (GlcNAc...) asparagine) is linked at Asn201. The segment at 214–236 (NTFRHIHGPKRKRDYTPKKNDKN) is disordered. Over residues 217–226 (RHIHGPKRKR) the composition is skewed to basic residues. A Mn(2+)-binding site is contributed by His218. 218–220 (HIH) contributes to the UDP-alpha-D-galactose binding site. Positions 227–236 (DYTPKKNDKN) are enriched in basic and acidic residues.

It belongs to the glycosyltransferase 7 family. Mn(2+) is required as a cofactor.

It localises to the membrane. It carries out the reaction 3-O-(beta-D-xylosyl)-L-seryl-[protein] + UDP-alpha-D-galactose = 3-O-(beta-D-galactosyl-(1-&gt;4)-beta-D-xylosyl)-L-seryl-[protein] + UDP + H(+). It functions in the pathway protein modification; protein glycosylation. Glycosyltransferase required for the biosynthesis of the tetrasaccharide (GlcA-Gal-Gal-Xyl-)Ser core linker of heparan sulfate and chondroitin sulfate. Required for embryonic development. Involved in vulval epithelium invagination. Required for axon regeneration after injury. In Caenorhabditis elegans, this protein is Xylosylprotein 4-beta-galactosyltransferase (sqv-3).